We begin with the raw amino-acid sequence, 264 residues long: Probable amino-acid-binding protein YxeM (264 aa).

The first 20 residues, Met-1 to Ala-20, serve as a signal peptide directing secretion. Residue Cys-21 is the site of N-palmitoyl cysteine attachment. Cys-21 is lipidated: S-diacylglycerol cysteine.

The protein belongs to the bacterial solute-binding protein 3 family. As to quaternary structure, the complex is composed of two ATP-binding proteins (YxeO), two transmembrane proteins (YxeN) and a solute-binding protein (YxeM).

It is found in the cell membrane. Its subcellular location is the membrane raft. Probably part of the ABC transporter complex YxeMNO that could be involved in amino-acid import. May transport S-methylcysteine. In Bacillus subtilis (strain 168), this protein is Probable amino-acid-binding protein YxeM (yxeM).